Here is a 688-residue protein sequence, read N- to C-terminus: Complement C1s subcomponent (688 aa).

Positions 1-15 are cleaved as a signal peptide; sequence MWCIVLFSLLAWVYA. Residues 16 to 130 form the CUB 1 domain; it reads EPTMYGEILS…TGFAAYYVAT (115 aa). Residues glutamate 60, aspartate 68, aspartate 113, aspartate 131, isoleucine 132, and glutamate 134 each contribute to the Ca(2+) site. Cysteine 65 and cysteine 83 are joined by a disulfide. The 42-residue stretch at 131–172 folds into the EGF-like; calcium-binding domain; the sequence is DINECTDFVDVPCSHFCNNFIGGYFCSCPPEYFLHDDMKNCG. 3 cysteine pairs are disulfide-bonded: cysteine 135/cysteine 147, cysteine 143/cysteine 156, and cysteine 158/cysteine 171. Positions 149, 150, and 153 each coordinate Ca(2+). (3R)-3-hydroxyasparagine is present on asparagine 149. An N-linked (GlcNAc...) asparagine glycan is attached at asparagine 174. Cysteine 175 and cysteine 202 are joined by a disulfide. Residues 175–290 form the CUB 2 domain; it reads CSGDVFTALI…KGWKLRYHGD (116 aa). 5 residues coordinate Ca(2+): glutamate 226, aspartate 236, aspartate 275, glycine 278, and glutamine 279. A disulfide bond links cysteine 234 and cysteine 251. Sushi domains follow at residues 292 to 356 and 357 to 423; these read MPCP…KCQP and VDCG…KCVP. Cystine bridges form between cysteine 294–cysteine 341, cysteine 321–cysteine 354, cysteine 359–cysteine 403, cysteine 386–cysteine 421, cysteine 425–cysteine 549, cysteine 595–cysteine 618, and cysteine 628–cysteine 659. An N-linked (GlcNAc...) asparagine glycan is attached at asparagine 406. A Peptidase S1 domain is found at 438–680; that stretch reads IIGGSDADIK…YVDWIMKTMQ (243 aa). Residues histidine 475 and aspartate 529 each act as charge relay system in the active site. The active-site Charge relay system is the serine 632.

Belongs to the peptidase S1 family. Core component of the complement C1 complex, a calcium-dependent complex composed of 1 molecule of the C1Q subcomplex, 2 molecules of C1R and 2 molecules of C1S. The C1Q subcomplex is composed 18 subunits: 3 chains of C1QA, C1QB, and C1QC trimerize to form 6 collagen-like triple helices connected to six globular ligand-recognition modules. Post-translationally, cleaved and activated by C1R to generate Complement C1s subcomponent heavy and light chains. In terms of processing, the iron and 2-oxoglutarate dependent 3-hydroxylation of aspartate and asparagine is (R) stereospecific within EGF domains.

It localises to the secreted. It is found in the cell surface. It carries out the reaction Cleavage of Arg-|-Ala bond in complement component C4 to form C4a and C4b, and Lys(or Arg)-|-Lys bond in complement component C2 to form C2a and C2b: the 'classical' pathway C3 convertase.. Its activity is regulated as follows. Cleaved and activated by C1R. Immunoglobulin-binding promotes autoactivation of C1R, which results in the cleavage of the Arg-Ile bond in the catalytic domain. Inhibited by C1 inhibitor (SERPING1). Functionally, component of the complement C1 complex, a multiprotein complex that initiates the classical pathway of the complement system, a cascade of proteins that leads to phagocytosis and breakdown of pathogens and signaling that strengthens the adaptive immune system. C1S is activated following association of the C1 complex with immunoglobulins (IgG or IgM) complexed with antigens to form antigen-antibody complexes on the surface of pathogens. C1S is cleaved and activated by C1R to generate C1s subcomponent heavy and light chains. C1s subcomponent light chain then cleaves and activates C2 and C4, the next components of the classical complement pathway. Serine protease component of the complement C1 complex, which catalyzes cleavage and activation of C2 and C4, the next components of the classical complement pathway. Also able to cleave C1 inhibitor (SERPING1) in vitro; additional evidence is however required to confirm this result in vivo. Also cleaves IGFBP5 and thereby inhibits the trophic effects of IGF1. This is Complement C1s subcomponent from Homo sapiens (Human).